We begin with the raw amino-acid sequence, 185 residues long: ATP synthase subunit b (185 aa).

A helical transmembrane segment spans residues 28–48 (VVLVGFAVLMYIVVKFVVPMF).

Belongs to the ATPase B chain family. As to quaternary structure, F-type ATPases have 2 components, F(1) - the catalytic core - and F(0) - the membrane proton channel. F(1) has five subunits: alpha(3), beta(3), gamma(1), delta(1), epsilon(1). F(0) has three main subunits: a(1), b(2) and c(10-14). The alpha and beta chains form an alternating ring which encloses part of the gamma chain. F(1) is attached to F(0) by a central stalk formed by the gamma and epsilon chains, while a peripheral stalk is formed by the delta and b chains.

It localises to the cell membrane. In terms of biological role, f(1)F(0) ATP synthase produces ATP from ADP in the presence of a proton or sodium gradient. F-type ATPases consist of two structural domains, F(1) containing the extramembraneous catalytic core and F(0) containing the membrane proton channel, linked together by a central stalk and a peripheral stalk. During catalysis, ATP synthesis in the catalytic domain of F(1) is coupled via a rotary mechanism of the central stalk subunits to proton translocation. Component of the F(0) channel, it forms part of the peripheral stalk, linking F(1) to F(0). This is ATP synthase subunit b from Paenarthrobacter aurescens (strain TC1).